Reading from the N-terminus, the 91-residue chain is UPF0335 protein BBta_6866 (91 aa).

It belongs to the UPF0335 family.

The sequence is that of UPF0335 protein BBta_6866 from Bradyrhizobium sp. (strain BTAi1 / ATCC BAA-1182).